The sequence spans 431 residues: Chaperone SurA (431 aa).

An N-terminal signal peptide occupies residues 1–20 (MKNWRTLILGLALSASTAFA). PpiC domains follow at residues 171-272 (NDEL…KVND) and 282-382 (VTET…QLLD).

The protein localises to the periplasm. It catalyses the reaction [protein]-peptidylproline (omega=180) = [protein]-peptidylproline (omega=0). Chaperone involved in the correct folding and assembly of outer membrane proteins. Recognizes specific patterns of aromatic residues and the orientation of their side chains, which are found more frequently in integral outer membrane proteins. May act in both early periplasmic and late outer membrane-associated steps of protein maturation. This chain is Chaperone SurA, found in Pectobacterium atrosepticum (strain SCRI 1043 / ATCC BAA-672) (Erwinia carotovora subsp. atroseptica).